A 567-amino-acid polypeptide reads, in one-letter code: CTD small phosphatase-like protein 2 (567 aa).

Disordered stretches follow at residues 31-53, 100-150, and 280-361; these read QQQQHQHEDTDSPKKKKLRHQCE, ASST…FSSV, and NKEN…EEFN. 3 stretches are compositionally biased toward low complexity: residues 100 to 118, 130 to 150, and 286 to 297; these read ASSTSSISPSSSQSSSPLK, SMNDSTSSSSSSNNNNNFSSV, and ESNNSNSNSNSS. The segment covering 298–308 has biased composition (polar residues); it reads PSFFHNLQQHP. Over residues 309–332 the composition is skewed to low complexity; that stretch reads TSAATTTTTTTTTITTTSATTSII. Over residues 337–360 the composition is skewed to acidic residues; that stretch reads NSDDEIDDECDDESEEEEEDEEEF. One can recognise an FCP1 homology domain in the interval 386-544; that stretch reads HSSPKISLVL…LQLVPFLESL (159 aa).

This sequence belongs to the CTDSPL2 family.

Its function is as follows. Probable phosphatase. In Dictyostelium discoideum (Social amoeba), this protein is CTD small phosphatase-like protein 2 (ctdspl2).